Here is a 324-residue protein sequence, read N- to C-terminus: MSLLRSLRFFPVACTGRSARAVLLQPSQPWLTFHAGPSLSSAASSKELLMKLRRKTGYSFVNCKKALETCGGDLKQAEDWLHKQAQKEGWSKAAKLHGRKTKEGLIGLLQEGNTAVLVEVNCETDFVSRNLKFQQLVQQVALGTMAHCQNLTDRLSTYSKGFLNSSELSELAAGPDREGSLKDQLALAIGKLGENMILKRAAWVKVPSGFYVGSYVHGVTQSPSLQNLVLGKYGALVICETPEQIANLEEVGRRLGQHVVGMAPLSVGSLDDEPGGETETRMLPQPYLLDPSITLGQYVQPQGVTVVDFVRFECGEDEQVAEAE.

A mitochondrion-targeting transit peptide spans 1 to 44 (MSLLRSLRFFPVACTGRSARAVLLQPSQPWLTFHAGPSLSSAAS). An N6-succinyllysine mark is found at lysine 75, lysine 132, and lysine 191. At serine 269 the chain carries Phosphoserine.

The protein belongs to the EF-Ts family.

The protein resides in the mitochondrion. Its function is as follows. Associates with the EF-Tu.GDP complex and induces the exchange of GDP to GTP. It remains bound to the aminoacyl-tRNA.EF-Tu.GTP complex up to the GTP hydrolysis stage on the ribosome. The chain is Elongation factor Ts, mitochondrial (Tsfm) from Mus musculus (Mouse).